A 486-amino-acid chain; its full sequence is dTDP-4-dehydro-6-deoxy-alpha-D-glucopyranose 2,3-dehydratase (486 aa).

DTDP-4-dehydro-6-deoxy-alpha-D-glucose contacts are provided by residues Trp-66, 149-153 (TRSNY), Ser-187, Trp-304, Arg-367, 383-385 (QCS), 388-389 (NY), and 421-424 (EGGR).

The protein belongs to the hexose 2,3-dehydratase family. As to quaternary structure, homodimer.

The enzyme catalyses dTDP-4-dehydro-6-deoxy-alpha-D-glucose = dTDP-3,4-didehydro-2,6-dideoxy-alpha-D-glucose + H2O. In terms of biological role, involved in the biosynthesis of forosamine ((4-dimethylamino)-2,3,4,6-tetradeoxy-alpha-D-threo-hexopyranose), a highly deoxygenated sugar component of several bioactive natural products such as the insecticidal spinosyns A and D. Catalyzes the removal of the hydroxyl group at position C-2 of the hexose ring of dTDP-4-dehydro-6-deoxy-alpha-D-glucopyranose, and the oxidation of the hydroxyl group at position C-3 to form a carbonyl functionality. The product of the reaction, dTDP-2,6-dideoxy-D-glycero-hex-2-enos-4-ulose, is a highly unstable diketosugar, which spontaneously forms dTDP-3,4-didehydro-2,6-dideoxy-alpha-D-glucose. The chain is dTDP-4-dehydro-6-deoxy-alpha-D-glucopyranose 2,3-dehydratase from Saccharopolyspora spinosa.